Here is a 616-residue protein sequence, read N- to C-terminus: Spastin (616 aa).

A disordered region spans residues 1–43 (MNSPGGRGKKKGSGGASNPVPPRPPPPCLAPAPPAAGPAPPPE). A required for nuclear localization region spans residues 1-50 (MNSPGGRGKKKGSGGASNPVPPRPPPPCLAPAPPAAGPAPPPESPHKRNL). The Cytoplasmic segment spans residues 1–56 (MNSPGGRGKKKGSGGASNPVPPRPPPPCLAPAPPAAGPAPPPESPHKRNLYYFSYP). The tract at residues 1–80 (MNSPGGRGKK…LGLLFVWLCQ (80 aa)) is required for interaction with ATL1. Residues 1-194 (MNSPGGRGKK…LVMAKDRLQL (194 aa)) form a required for midbody localization region. The tract at residues 1–300 (MNSPGGRGKK…GTPKTNRTNK (300 aa)) is required for interaction with RTN1. The Nuclear localization signal motif lies at 4 to 11 (PGGRGKKK). The segment covering 19–43 (PVPPRPPPPCLAPAPPAAGPAPPPE) has biased composition (pro residues). The tract at residues 50–87 (LYYFSYPLFVGFALLRLVAFHLGLLFVWLCQRFSRALM) is required for interaction with SSNA1 and microtubules. The helical intramembrane region spans 57–77 (LFVGFALLRLVAFHLGLLFVW). A Nuclear export signal motif is present at residues 59–67 (VGFALLRLV). At 78–616 (LCQRFSRALM…WNKDFGDTTV (539 aa)) the chain is on the cytoplasmic side. Residues 112 to 196 (EAERVRVFHK…MAKDRLQLLE (85 aa)) are sufficient for interaction with CHMP1B. A required for interaction with microtubules region spans residues 114 to 200 (ERVRVFHKQA…RLQLLEKMQP (87 aa)). The MIT domain occupies 120-195 (HKQAFEYISI…VMAKDRLQLL (76 aa)). Positions 224-266 (HLQSESGAVPKRKDPLTHTSNSLPRSKTVMKTGSAGLSGHHRA) are disordered. The segment at 228–616 (ESGAVPKRKD…WNKDFGDTTV (389 aa)) is sufficient for microtubule severing. Residues 240–254 (THTSNSLPRSKTVMK) are compositionally biased toward polar residues. Phosphoserine is present on residues Ser-245 and Ser-268. The interval 270–328 (SGLSMVSGVKQGSGPAPTTHKGTPKTNRTNKPSTPTTATRKKKDLKNFRNVDSNLANLI) is required for interaction with microtubules and microtubule severing. A disordered region spans residues 278–312 (VKQGSGPAPTTHKGTPKTNRTNKPSTPTTATRKKK). A compositionally biased stretch (polar residues) spans 289–307 (HKGTPKTNRTNKPSTPTTA). Thr-306 carries the post-translational modification Phosphothreonine. The Nuclear localization signal motif lies at 309-312 (RKKK). Residues 310-312 (KKK) form a required for interaction with microtubules region. Residue 382 to 389 (GPPGNGKT) coordinates ATP. Ser-597 is subject to Phosphoserine.

The protein belongs to the AAA ATPase family. Spastin subfamily. As to quaternary structure, homohexamer. Mostly monomeric, but assembles into hexameric structure for short periods of time. Oligomerization seems to be a prerequisite for catalytic activity. Binding to ATP in a cleft between two adjacent subunits stabilizes the homohexameric form. Binds to microtubules at least in part via the alpha-tubulin and beta-tubulin tails. The hexamer adopts a ring conformation through which microtubules pass prior to being severed. Does not interact strongly with tubulin heterodimers. Interacts (via MIT domain) with CHMP1B; the interaction is direct. Interacts with SSNA1. Interacts with ATL1. Interacts with RTN1. Interacts with ZFYVE27. Isoform 1 but not isoform 3 interacts with RTN2. Interacts with REEP1. Interacts (via MIT domain) with IST1. Expressed in brain, heart, kidney, liver, lung, pancreas, placenta and skeletal muscle. The short isoforms may predominate in brain and spinal cord.

The protein resides in the membrane. Its subcellular location is the endoplasmic reticulum. The protein localises to the midbody. It is found in the cytoplasm. It localises to the cytoskeleton. The protein resides in the microtubule organizing center. Its subcellular location is the centrosome. The protein localises to the perinuclear region. It is found in the nucleus. It localises to the spindle. The protein resides in the cell projection. Its subcellular location is the axon. The protein localises to the endoplasmic reticulum membrane. It is found in the nucleus membrane. It localises to the lipid droplet. The protein resides in the endosome. The enzyme catalyses n ATP + n H2O + a microtubule = n ADP + n phosphate + (n+1) alpha/beta tubulin heterodimers.. Allosteric enzyme with a cooperative mechanism; at least two neighbor subunits influence each other strongly in spastin hexamers. Microtubule binding promotes cooperative interactions among spastin subunits. ATP-bound enzyme interacts strongly and cooperatively with microtubules; this interaction stimulates ATP hydrolysis. Its function is as follows. ATP-dependent microtubule severing protein that specifically recognizes and cuts microtubules that are polyglutamylated. Preferentially recognizes and acts on microtubules decorated with short polyglutamate tails: severing activity increases as the number of glutamates per tubulin rises from one to eight, but decreases beyond this glutamylation threshold. Severing activity is not dependent on tubulin acetylation or detyrosination. Microtubule severing promotes reorganization of cellular microtubule arrays and the release of microtubules from the centrosome following nucleation. It is critical for the biogenesis and maintenance of complex microtubule arrays in axons, spindles and cilia. SPAST is involved in abscission step of cytokinesis and nuclear envelope reassembly during anaphase in cooperation with the ESCRT-III complex. Recruited at the midbody, probably by IST1, and participates in membrane fission during abscission together with the ESCRT-III complex. Recruited to the nuclear membrane by IST1 and mediates microtubule severing, promoting nuclear envelope sealing and mitotic spindle disassembly during late anaphase. Required for membrane traffic from the endoplasmic reticulum (ER) to the Golgi and endosome recycling. Recruited by IST1 to endosomes and regulates early endosomal tubulation and recycling by mediating microtubule severing. Probably plays a role in axon growth and the formation of axonal branches. Involved in lipid metabolism by regulating the size and distribution of lipid droplets. The chain is Spastin from Homo sapiens (Human).